The sequence spans 428 residues: tRNA(Ile)-lysidine synthase (428 aa).

Residue 28 to 33 coordinates ATP; sequence SGGVDS.

This sequence belongs to the tRNA(Ile)-lysidine synthase family.

It localises to the cytoplasm. The catalysed reaction is cytidine(34) in tRNA(Ile2) + L-lysine + ATP = lysidine(34) in tRNA(Ile2) + AMP + diphosphate + H(+). In terms of biological role, ligates lysine onto the cytidine present at position 34 of the AUA codon-specific tRNA(Ile) that contains the anticodon CAU, in an ATP-dependent manner. Cytidine is converted to lysidine, thus changing the amino acid specificity of the tRNA from methionine to isoleucine. The polypeptide is tRNA(Ile)-lysidine synthase (Streptococcus pyogenes serotype M1).